We begin with the raw amino-acid sequence, 424 residues long: Kynureninase (424 aa).

Pyridoxal 5'-phosphate is bound by residues Leu106, Thr107, 134 to 137 (FPSD), Asp219, His222, and Tyr244. Lys245 carries the N6-(pyridoxal phosphate)lysine modification. Residues Trp274 and Asn302 each contribute to the pyridoxal 5'-phosphate site.

It belongs to the kynureninase family. As to quaternary structure, homodimer. Pyridoxal 5'-phosphate is required as a cofactor.

The catalysed reaction is L-kynurenine + H2O = anthranilate + L-alanine + H(+). It catalyses the reaction 3-hydroxy-L-kynurenine + H2O = 3-hydroxyanthranilate + L-alanine + H(+). The protein operates within amino-acid degradation; L-kynurenine degradation; L-alanine and anthranilate from L-kynurenine: step 1/1. Its pathway is cofactor biosynthesis; NAD(+) biosynthesis; quinolinate from L-kynurenine: step 2/3. In terms of biological role, catalyzes the cleavage of L-kynurenine (L-Kyn) and L-3-hydroxykynurenine (L-3OHKyn) into anthranilic acid (AA) and 3-hydroxyanthranilic acid (3-OHAA), respectively. This Xanthomonas campestris pv. campestris (strain 8004) protein is Kynureninase.